Here is a 351-residue protein sequence, read N- to C-terminus: sn-glycerol-3-phosphate import ATP-binding protein UgpC (351 aa).

One can recognise an ABC transporter domain in the interval 4-234 (ITLDNLVKAY…PATTFVAGFI (231 aa)). 36–43 (GPSGCGKS) is an ATP binding site.

This sequence belongs to the ABC transporter superfamily. sn-glycerol-3-phosphate importer (TC 3.A.1.1.3) family. In terms of assembly, the complex is composed of two ATP-binding proteins (UgpC), two transmembrane proteins (UgpA and UgpE) and a solute-binding protein (UgpB).

The protein resides in the cell inner membrane. The enzyme catalyses sn-glycerol 3-phosphate(out) + ATP + H2O = sn-glycerol 3-phosphate(in) + ADP + phosphate + H(+). In terms of biological role, part of the ABC transporter complex UgpBAEC involved in sn-glycerol-3-phosphate (G3P) import. Responsible for energy coupling to the transport system. This chain is sn-glycerol-3-phosphate import ATP-binding protein UgpC, found in Ruegeria pomeroyi (strain ATCC 700808 / DSM 15171 / DSS-3) (Silicibacter pomeroyi).